The primary structure comprises 30 residues: Sperm protamine P5 (30 aa).

The tract at residues 1–30 (YRRRRRRGRRGRRRRGRRRRSRGRRRAHGG) is disordered.

As to expression, testis.

It is found in the nucleus. The protein resides in the chromosome. Protamines substitute for histones in the chromatin of sperm during the haploid phase of spermatogenesis. They compact sperm DNA into a highly condensed, stable and inactive complex. This is Sperm protamine P5 from Octopus vulgaris (Common octopus).